Consider the following 493-residue polypeptide: Cysteine--tRNA ligase (493 aa).

Zn(2+) is bound at residue C31. A 'HIGH' region motif is present at residues 33–43 (PTVYGDAHLGH). Zn(2+) is bound by residues C226, H251, and E255. A 'KMSKS' region motif is present at residues 283-287 (KMGKS). K286 contacts ATP.

This sequence belongs to the class-I aminoacyl-tRNA synthetase family. In terms of assembly, monomer. The cofactor is Zn(2+).

Its subcellular location is the cytoplasm. It carries out the reaction tRNA(Cys) + L-cysteine + ATP = L-cysteinyl-tRNA(Cys) + AMP + diphosphate. The sequence is that of Cysteine--tRNA ligase from Bacteroides thetaiotaomicron (strain ATCC 29148 / DSM 2079 / JCM 5827 / CCUG 10774 / NCTC 10582 / VPI-5482 / E50).